Consider the following 399-residue polypeptide: MMNIPNIENCDLHGKAVLLRVDFNIPIKNGKVHDATRVLRSLPTIRHLVNAGAKVIIISHFGRPRAKDNNLSLKNVVKTLSQLLNKEVKFVDDCIGKKVQKVVNAIAIRDVILLENLRFYKEEEQNDANFAKQLASLADVYVNDAFSCSHRAHASISRITEFLPSYAGFCLQDELRYLEKAVSFEAKPITAIVGGAKISTKIKMLIRLAEKVDYLVLGGAIANNFLLFNKVNIGKSFFQNGVDSLLHDVVKIADKNNCKIVIPEDVLIAVNSDYSTCILRKTESVLDNDVILDIGPQTLSTISSIVASSKALLWNGPIGVFEHSAFANGTIEVMKVVSDSTHKGKLTSVIGGGDSLSAINAAGLTDKDFTYVSTGGGAFLSWLSGDKMPGIAALQSMLN.

Substrate-binding positions include 22 to 24, arginine 37, 60 to 63, arginine 118, and arginine 151; these read DFN and HFGR. Residues lysine 201, glutamate 322, and 352-355 contribute to the ATP site; that span reads GGDS.

This sequence belongs to the phosphoglycerate kinase family. Monomer.

It is found in the cytoplasm. It catalyses the reaction (2R)-3-phosphoglycerate + ATP = (2R)-3-phospho-glyceroyl phosphate + ADP. Its pathway is carbohydrate degradation; glycolysis; pyruvate from D-glyceraldehyde 3-phosphate: step 2/5. The protein is Phosphoglycerate kinase of Wolbachia sp. subsp. Brugia malayi (strain TRS).